The sequence spans 268 residues: MDSLTTHPATAQQARAFTSPSSLSFPGGTAFPGGADLTPPSDKDANMATNGQSANGNVNGQQQGANAANGNGVMPATPAATPGASAPGSGIVPTLQNIVATVNLDCRLDLKTIALHARNAEYNPKRFAAVIMRIREPKTTALIFASGKMVVTGAKSEDDSKLASRKYARIIQKLGFNAKFTDFKIQNIVGSCDIKFPIRLEGLASRHHNFSSYEPELFPGLIYRMMKPKIVLLIFVSGKIVLTGAKVREEIYQAFELIYPVLSDFRKV.

Residues 1-24 (MDSLTTHPATAQQARAFTSPSSLS) show a composition bias toward polar residues. Positions 1-86 (MDSLTTHPAT…TPAATPGASA (86 aa)) are disordered. Positions 50 to 86 (NGQSANGNVNGQQQGANAANGNGVMPATPAATPGASA) are enriched in low complexity. A run of 2 repeats spans residues 95-171 (LQNI…ARII) and 185-262 (IQNI…YPVL).

The protein belongs to the TBP family. In terms of assembly, belongs to the TFIID complex together with the TBP-associated factors (TAFs). Binds DNA as monomer.

It is found in the nucleus. In terms of biological role, general transcription factor that functions at the core of the DNA-binding multiprotein factor TFIID. Binding of TFIID to the TATA box is the initial transcriptional step of the pre-initiation complex (PIC), playing a role in the activation of eukaryotic genes transcribed by RNA polymerase II. This chain is TATA-box-binding protein (tbpA), found in Emericella nidulans (strain FGSC A4 / ATCC 38163 / CBS 112.46 / NRRL 194 / M139) (Aspergillus nidulans).